A 104-amino-acid polypeptide reads, in one-letter code: UPF0213 protein VIBHAR_05350 (104 aa).

The GIY-YIG domain maps to 7–82; the sequence is QRWSVYLIRN…KQLTKTKKEL (76 aa).

Belongs to the UPF0213 family.

The protein is UPF0213 protein VIBHAR_05350 of Vibrio campbellii (strain ATCC BAA-1116).